The following is a 352-amino-acid chain: Endophilin-A1 (352 aa).

Positions 1–21 (MSVAGLKKQFHKATQKVSEKV) are membrane-binding amphipathic helix. Positions 1–27 (MSVAGLKKQFHKATQKVSEKVGGAEGT) are disordered. The segment at 1–125 (MSVAGLKKQF…EVGEAMRELS (125 aa)) is binds and tubulates liposomes. One can recognise a BAR domain in the interval 18–249 (SEKVGGAEGT…LEERIRQASS (232 aa)). The interval 60–87 (PNPASRAKLSMINTMSKIRGQEKGPGYP) is required for dimerization upon membrane association. Residues 181-248 (EELRQALEKF…RLEERIRQAS (68 aa)) are a coiled coil. A compositionally biased stretch (basic and acidic residues) spans 245–257 (RQASSQPRREYQP). A disordered region spans residues 245 to 289 (RQASSQPRREYQPKPRMSLEFPTGDSTQPNGGLSHTGTPKPSGVQ). Residue Ser262 is modified to Phosphoserine. The segment covering 268 to 283 (GDSTQPNGGLSHTGTP) has biased composition (polar residues). The SH3 domain occupies 290–349 (MDQPCCRALYDFEPENEGELGFKEGDIITLTNQIDENWYEGMLHGHSGFFPINYVEILVA). Tyr299 bears the Phosphotyrosine mark.

Belongs to the endophilin family. As to quaternary structure, monomer; in cytoplasm. Homodimer; when associated with membranes. Interacts with OPHN1. Interacts with SYNJ1. Interacts with DNM1. Interacts with MAP4K3; the interaction appears to regulate MAP4K3-mediated JNK activation. Interacts with PDCD6IP. Interacts with ATXN2. Interacts with ADAM9 and ADAM15 cytoplasmic tails. Interacts with BIN2. Interacts with TMEM108. Interacts with ADGRB2. Brain, mostly in frontal cortex. Expressed at high level in fetal cerebellum.

The protein resides in the cytoplasm. Its subcellular location is the membrane. The protein localises to the early endosome. It localises to the presynapse. Its function is as follows. Implicated in synaptic vesicle endocytosis. May recruit other proteins to membranes with high curvature. Required for BDNF-dependent dendrite outgrowth. Cooperates with SH3GL2 to mediate BDNF-NTRK2 early endocytic trafficking and signaling from early endosomes. This chain is Endophilin-A1 (SH3GL2), found in Homo sapiens (Human).